The primary structure comprises 337 residues: UDP-N-acetylenolpyruvoylglucosamine reductase (337 aa).

The FAD-binding PCMH-type domain maps to 16–187; it reads ALPGRAARYQ…TSVIFRLAKA (172 aa). R160 is an active-site residue. S237 (proton donor) is an active-site residue. Residue E333 is part of the active site.

FAD is required as a cofactor.

The protein resides in the cytoplasm. It catalyses the reaction UDP-N-acetyl-alpha-D-muramate + NADP(+) = UDP-N-acetyl-3-O-(1-carboxyvinyl)-alpha-D-glucosamine + NADPH + H(+). The protein operates within cell wall biogenesis; peptidoglycan biosynthesis. Cell wall formation. The sequence is that of UDP-N-acetylenolpyruvoylglucosamine reductase from Dechloromonas aromatica (strain RCB).